The primary structure comprises 255 residues: Acetylglutamate kinase (255 aa).

Substrate contacts are provided by residues 40 to 41 (GG), arginine 62, and asparagine 153.

This sequence belongs to the acetylglutamate kinase family. ArgB subfamily.

The protein localises to the cytoplasm. The catalysed reaction is N-acetyl-L-glutamate + ATP = N-acetyl-L-glutamyl 5-phosphate + ADP. The protein operates within amino-acid biosynthesis; L-arginine biosynthesis; N(2)-acetyl-L-ornithine from L-glutamate: step 2/4. In terms of biological role, catalyzes the ATP-dependent phosphorylation of N-acetyl-L-glutamate. The sequence is that of Acetylglutamate kinase from Bacillus anthracis (strain CDC 684 / NRRL 3495).